Consider the following 220-residue polypeptide: Heptaprenyl diphosphate synthase component 1 (220 aa).

As to quaternary structure, heterodimer of component I and II.

The catalysed reaction is 4 isopentenyl diphosphate + (2E,6E)-farnesyl diphosphate = all-trans-heptaprenyl diphosphate + 4 diphosphate. Its function is as follows. Supplies heptaprenyl diphosphate, the precursor for the side chain of the isoprenoid quinone menaquinone-7 (MQ-7). In Geobacillus stearothermophilus (Bacillus stearothermophilus), this protein is Heptaprenyl diphosphate synthase component 1 (hepS).